Here is a 276-residue protein sequence, read N- to C-terminus: Formamidopyrimidine-DNA glycosylase (276 aa).

Pro2 serves as the catalytic Schiff-base intermediate with DNA. The active-site Proton donor is the Glu3. Catalysis depends on Lys60, which acts as the Proton donor; for beta-elimination activity. 2 residues coordinate DNA: His93 and Arg112. The FPG-type zinc-finger motif lies at His240–Pro274. Arg264 functions as the Proton donor; for delta-elimination activity in the catalytic mechanism.

It belongs to the FPG family. In terms of assembly, monomer. The cofactor is Zn(2+).

It carries out the reaction Hydrolysis of DNA containing ring-opened 7-methylguanine residues, releasing 2,6-diamino-4-hydroxy-5-(N-methyl)formamidopyrimidine.. It catalyses the reaction 2'-deoxyribonucleotide-(2'-deoxyribose 5'-phosphate)-2'-deoxyribonucleotide-DNA = a 3'-end 2'-deoxyribonucleotide-(2,3-dehydro-2,3-deoxyribose 5'-phosphate)-DNA + a 5'-end 5'-phospho-2'-deoxyribonucleoside-DNA + H(+). Its function is as follows. Involved in base excision repair of DNA damaged by oxidation or by mutagenic agents. Acts as a DNA glycosylase that recognizes and removes damaged bases. Has a preference for oxidized purines, such as 7,8-dihydro-8-oxoguanine (8-oxoG). Has AP (apurinic/apyrimidinic) lyase activity and introduces nicks in the DNA strand. Cleaves the DNA backbone by beta-delta elimination to generate a single-strand break at the site of the removed base with both 3'- and 5'-phosphates. This chain is Formamidopyrimidine-DNA glycosylase, found in Shouchella clausii (strain KSM-K16) (Alkalihalobacillus clausii).